We begin with the raw amino-acid sequence, 432 residues long: Serine hydroxymethyltransferase (432 aa).

(6S)-5,6,7,8-tetrahydrofolate-binding positions include Leu-127 and 131-133 (GHL). Lys-236 is modified (N6-(pyridoxal phosphate)lysine).

The protein belongs to the SHMT family. Homodimer. The cofactor is pyridoxal 5'-phosphate.

It localises to the cytoplasm. The enzyme catalyses (6R)-5,10-methylene-5,6,7,8-tetrahydrofolate + glycine + H2O = (6S)-5,6,7,8-tetrahydrofolate + L-serine. It functions in the pathway one-carbon metabolism; tetrahydrofolate interconversion. Its pathway is amino-acid biosynthesis; glycine biosynthesis; glycine from L-serine: step 1/1. Functionally, catalyzes the reversible interconversion of serine and glycine with tetrahydrofolate (THF) serving as the one-carbon carrier. This reaction serves as the major source of one-carbon groups required for the biosynthesis of purines, thymidylate, methionine, and other important biomolecules. Also exhibits THF-independent aldolase activity toward beta-hydroxyamino acids, producing glycine and aldehydes, via a retro-aldol mechanism. The protein is Serine hydroxymethyltransferase of Rhizobium rhizogenes (strain K84 / ATCC BAA-868) (Agrobacterium radiobacter).